The primary structure comprises 308 residues: Aspartate carbamoyltransferase catalytic subunit (308 aa).

2 residues coordinate carbamoyl phosphate: R49 and T50. K77 lines the L-aspartate pocket. Residues R99, H127, and Q130 each coordinate carbamoyl phosphate. Residues R160 and R211 each contribute to the L-aspartate site. Residues A252 and P253 each coordinate carbamoyl phosphate.

This sequence belongs to the aspartate/ornithine carbamoyltransferase superfamily. ATCase family. In terms of assembly, heterododecamer (2C3:3R2) of six catalytic PyrB chains organized as two trimers (C3), and six regulatory PyrI chains organized as three dimers (R2).

It carries out the reaction carbamoyl phosphate + L-aspartate = N-carbamoyl-L-aspartate + phosphate + H(+). It participates in pyrimidine metabolism; UMP biosynthesis via de novo pathway; (S)-dihydroorotate from bicarbonate: step 2/3. Its function is as follows. Catalyzes the condensation of carbamoyl phosphate and aspartate to form carbamoyl aspartate and inorganic phosphate, the committed step in the de novo pyrimidine nucleotide biosynthesis pathway. This Geobacillus kaustophilus (strain HTA426) protein is Aspartate carbamoyltransferase catalytic subunit.